Here is a 517-residue protein sequence, read N- to C-terminus: MAKAATPKTTAAAEAKPAAAKAPAKKAPAKTAAAKSDAAPKAAKTGAVGKITQVIGAVVDVQFEDGQLPLILNALETDNLGSRLVLEVAQHLGENTVRTIAMDSTEGLVRGHEVRDTGNPIMVPVGEETLGRIMNVIGEPVDEAGPIKTTARRAIHQEAPEYIEQSTEAEILVTGIKVVDLLAPYAKGGKIGLFGGAGVGKTVLIMELINNVAKAHGGYSVFAGVGERTREGNDLYHEMIESGVNKLGGGEGSKAALVYGQMNEPPGARARVALSGLTVAENFRDKGQDVLFFVDNIFRFTQAGSELSALLGRIPSAVGYQPTLATDMGAMQERITTTTKGSITSVQAIYVPADDLTDPAPATSFAHLDATTTLNRSIAEKGIYPAVDPLESTSRMLDPMIVGEEHYAVARQVQSILQRYKSLQDIIAILGMDELSEDDKLTVARARKIERFLSQPFFVAEVFTGSPGKLVDLADTIKGFKGLCAGEYDHLPEPAFYMVGSIEEAIEKAKKLAAEAA.

Composition is skewed to low complexity over residues 1 to 22 and 29 to 42; these read MAKA…AAKA and AKTA…APKA. Residues 1–42 are disordered; the sequence is MAKAATPKTTAAAEAKPAAAKAPAKKAPAKTAAAKSDAAPKA. ATP is bound at residue 195–202; sequence GGAGVGKT.

This sequence belongs to the ATPase alpha/beta chains family. F-type ATPases have 2 components, CF(1) - the catalytic core - and CF(0) - the membrane proton channel. CF(1) has five subunits: alpha(3), beta(3), gamma(1), delta(1), epsilon(1). CF(0) has three main subunits: a(1), b(2) and c(9-12). The alpha and beta chains form an alternating ring which encloses part of the gamma chain. CF(1) is attached to CF(0) by a central stalk formed by the gamma and epsilon chains, while a peripheral stalk is formed by the delta and b chains.

It is found in the cell inner membrane. The enzyme catalyses ATP + H2O + 4 H(+)(in) = ADP + phosphate + 5 H(+)(out). Functionally, produces ATP from ADP in the presence of a proton gradient across the membrane. The catalytic sites are hosted primarily by the beta subunits. The protein is ATP synthase subunit beta of Brucella anthropi (strain ATCC 49188 / DSM 6882 / CCUG 24695 / JCM 21032 / LMG 3331 / NBRC 15819 / NCTC 12168 / Alc 37) (Ochrobactrum anthropi).